The following is a 465-amino-acid chain: Gamma-aminobutyric acid receptor subunit gamma-1 (465 aa).

Positions 1–20 (MGSGKVFLFSPSLLWSQTRG) are cleaved as a signal peptide. Topologically, residues 21–273 (VRLIFLLLTL…FDLSRRMGYF (253 aa)) are extracellular. N-linked (GlcNAc...) asparagine glycosylation is found at asparagine 50 and asparagine 127. Cysteine 188 and cysteine 202 are disulfide-bonded. Asparagine 245 carries an N-linked (GlcNAc...) asparagine glycan. The helical transmembrane segment at 274-294 (TIQTYIPCILTVVLSWVSFWI) threads the bilayer. Topologically, residues 295 to 300 (NKDAVP) are cytoplasmic. The helical transmembrane segment at 301-320 (ARTSLGITTVLTMTTLSTIA) threads the bilayer. At 321-328 (RKSLPKVS) the chain is on the extracellular side. The chain crosses the membrane as a helical span at residues 329-349 (YVTAMDLFVSVCFIFVFAALM). Residues 350 to 444 (EYGTLHYFTS…RIAKIDSYSR (95 aa)) are Cytoplasmic-facing. Residues 445–465 (IFFPTAFALFNLVYWVGYLYL) form a helical membrane-spanning segment.

Belongs to the ligand-gated ion channel (TC 1.A.9) family. Gamma-aminobutyric acid receptor (TC 1.A.9.5) subfamily. GABRG1 sub-subfamily. In terms of assembly, heteropentamer, formed by a combination of alpha (GABRA1-6), beta (GABRB1-3), gamma (GABRG1-3), delta (GABRD), epsilon (GABRE), rho (GABRR1-3), pi (GABRP) and theta (GABRQ) chains, each subunit exhibiting distinct physiological and pharmacological properties. Post-translationally, may be palmitoylated. In terms of tissue distribution, expressed in brain.

Its subcellular location is the postsynaptic cell membrane. The protein resides in the cell membrane. The catalysed reaction is chloride(in) = chloride(out). Gamma subunit of the heteropentameric ligand-gated chloride channel gated by gamma-aminobutyric acid (GABA), a major inhibitory neurotransmitter in the brain. GABA-gated chloride channels, also named GABA(A) receptors (GABAAR), consist of five subunits arranged around a central pore and contain GABA active binding site(s) located at the alpha and beta subunit interface(s). When activated by GABA, GABAARs selectively allow the flow of chloride anions across the cell membrane down their electrochemical gradient. Chloride influx into the postsynaptic neuron following GABAAR opening decreases the neuron ability to generate a new action potential, thereby reducing nerve transmission. The polypeptide is Gamma-aminobutyric acid receptor subunit gamma-1 (Rattus norvegicus (Rat)).